A 555-amino-acid chain; its full sequence is Glutamate--tRNA ligase (555 aa).

Positions 103-113 (PNPSGPLHIGH) match the 'HIGH' region motif.

It belongs to the class-I aminoacyl-tRNA synthetase family. Glutamate--tRNA ligase type 2 subfamily.

It localises to the cytoplasm. It carries out the reaction tRNA(Glu) + L-glutamate + ATP = L-glutamyl-tRNA(Glu) + AMP + diphosphate. Functionally, catalyzes the attachment of glutamate to tRNA(Glu) in a two-step reaction: glutamate is first activated by ATP to form Glu-AMP and then transferred to the acceptor end of tRNA(Glu). This chain is Glutamate--tRNA ligase, found in Methanobrevibacter smithii (strain ATCC 35061 / DSM 861 / OCM 144 / PS).